The chain runs to 260 residues: Acetylglutamate kinase (260 aa).

Substrate contacts are provided by residues 46 to 47 (GG), R68, and N160.

It belongs to the acetylglutamate kinase family. ArgB subfamily.

It localises to the cytoplasm. The catalysed reaction is N-acetyl-L-glutamate + ATP = N-acetyl-L-glutamyl 5-phosphate + ADP. It participates in amino-acid biosynthesis; L-arginine biosynthesis; N(2)-acetyl-L-ornithine from L-glutamate: step 2/4. In terms of biological role, catalyzes the ATP-dependent phosphorylation of N-acetyl-L-glutamate. This chain is Acetylglutamate kinase, found in Shewanella baltica (strain OS223).